We begin with the raw amino-acid sequence, 455 residues long: MTQIMTPKTIVHELERHIIGQNDAKKAVAIALRNRWRRMQLDNEMRQEVTPKNILMIGPTGVGKTEIARRLAKLADAPFIKVEATKFTEVGYVGKDVESIIRDLVETAVKMKREEAKEKVTEKAARLAEDRILDVLIPPARTSESKVGFANEPAEDAASKKEKENKTREIFRKKIQKGELDDKEIEIEVAVAPKTIGVMGPPGMEDMTSQLQDLFSSLSTDKKKNKKMRIKDAIKLAQDEEAAKLVNEEDIKARALEAVEQNGIVFLDEIDKVCRKSSNSGADVSREGVQRDLLPLVEGSTVSTKYGMIKTDHILFIASGAFHVAKPSDLIPELQGRLPIRVELKSLEIEDFVRILREPDCSILKQYIALMKTEGVDLSFEEDAIRKIAEIAYKVNEEVENIGARRLHTVMERLLEEISFDAPELVEKNINITTDYVNEKLGNLVKNKDLSQYIL.

Residues Ile-19 and 61-66 contribute to the ATP site; that span reads GVGKTE. The disordered stretch occupies residues 144–163; that stretch reads ESKVGFANEPAEDAASKKEK. ATP-binding residues include Asp-268, Glu-333, and Arg-405.

Belongs to the ClpX chaperone family. HslU subfamily. As to quaternary structure, a double ring-shaped homohexamer of HslV is capped on each side by a ring-shaped HslU homohexamer. The assembly of the HslU/HslV complex is dependent on binding of ATP.

Its subcellular location is the cytoplasm. In terms of biological role, ATPase subunit of a proteasome-like degradation complex; this subunit has chaperone activity. The binding of ATP and its subsequent hydrolysis by HslU are essential for unfolding of protein substrates subsequently hydrolyzed by HslV. HslU recognizes the N-terminal part of its protein substrates and unfolds these before they are guided to HslV for hydrolysis. The chain is ATP-dependent protease ATPase subunit HslU from Francisella tularensis subsp. novicida (strain U112).